A 60-amino-acid polypeptide reads, in one-letter code: MAKHPVPKKKTSKARRDARRSHHALTPPTLVPCPECKAMKPPHTVCPECGYYAGRKVLEV.

A compositionally biased stretch (basic residues) spans 1–23; sequence MAKHPVPKKKTSKARRDARRSHH. Residues 1–30 are disordered; sequence MAKHPVPKKKTSKARRDARRSHHALTPPTL.

In terms of assembly, part of the 50S ribosomal subunit.

Functionally, found on the solvent side of the large subunit. This chain is Large ribosomal subunit protein bL32 (rpmF), found in Thermus thermophilus (strain ATCC 27634 / DSM 579 / HB8).